A 329-amino-acid polypeptide reads, in one-letter code: MTVTIYDVAREARVSMATVSRVVNGNQNVKAETKNKVNEVIKRLNYRPNAVARGLASKKTTTVGVIIPDISNIYYSQLARGLEDIAIMYKYHSIISNSDNDPEKEKEIFNNLLSKQVDGIIFLGGTITEEMKELINQSSVPVVVSGTNGKDAHIASVNIDFTEAAKEITGKLIEKGAKSFALVGGEHSKKAQEDVLAGLTEVLNKNSLQLGDTLNCSGAESYKEGVKAFAKMKGNLPDAILCISDEEAIGIMHSAMDAGIKVPEELQIISFNNTRLVEMVRPQLSSVIQPLYDIGAVGMRLLTKYMNDEKIEEPNVVLPHRIEYRGTTK.

One can recognise an HTH lacI-type domain in the interval Met-1–Ser-57. The segment at residues Ile-5–Asn-24 is a DNA-binding region (H-T-H motif).

Global transcriptional regulator of carbon catabolite repression (CCR) and carbon catabolite activation (CCA), which ensures optimal energy usage under diverse conditions. This is Catabolite control protein A (ccpA) from Staphylococcus aureus (strain MRSA252).